Consider the following 179-residue polypeptide: Large ribosomal subunit protein uL5 (179 aa).

It belongs to the universal ribosomal protein uL5 family. In terms of assembly, part of the 50S ribosomal subunit; part of the 5S rRNA/L5/L18/L25 subcomplex. Contacts the 5S rRNA and the P site tRNA. Forms a bridge to the 30S subunit in the 70S ribosome.

Its function is as follows. This is one of the proteins that bind and probably mediate the attachment of the 5S RNA into the large ribosomal subunit, where it forms part of the central protuberance. In the 70S ribosome it contacts protein S13 of the 30S subunit (bridge B1b), connecting the 2 subunits; this bridge is implicated in subunit movement. Contacts the P site tRNA; the 5S rRNA and some of its associated proteins might help stabilize positioning of ribosome-bound tRNAs. The sequence is that of Large ribosomal subunit protein uL5 from Verminephrobacter eiseniae (strain EF01-2).